Here is a 413-residue protein sequence, read N- to C-terminus: NPL4-like protein 1 (413 aa).

S104 is subject to Phosphoserine. Residues 131–272 enclose the MPN domain; it reads SVSFDRDCAN…ADVHFEPFQM (142 aa).

This sequence belongs to the NPL4 family.

The protein operates within protein degradation; proteasomal ubiquitin-dependent pathway. Its function is as follows. May be part of a complex that binds ubiquitinated proteins and that is necessary for the export of misfolded proteins from the ER to the cytoplasm, where they are degraded by the proteasome. The chain is NPL4-like protein 1 from Arabidopsis thaliana (Mouse-ear cress).